The following is a 172-amino-acid chain: 3-phenylpropionate/cinnamic acid dioxygenase subunit beta (172 aa).

This sequence belongs to the bacterial ring-hydroxylating dioxygenase beta subunit family. This dioxygenase system consists of four proteins: the two subunits of the hydroxylase component (HcaE and HcaF), a ferredoxin (HcaC) and a ferredoxin reductase (HcaD).

The catalysed reaction is 3-phenylpropanoate + NADH + O2 + H(+) = 3-(cis-5,6-dihydroxycyclohexa-1,3-dien-1-yl)propanoate + NAD(+). It catalyses the reaction (E)-cinnamate + NADH + O2 + H(+) = (2E)-3-(cis-5,6-dihydroxycyclohexa-1,3-dien-1-yl)prop-2-enoate + NAD(+). It participates in aromatic compound metabolism; 3-phenylpropanoate degradation. Its function is as follows. Part of the multicomponent 3-phenylpropionate dioxygenase. Converts 3-phenylpropionic acid (PP) and cinnamic acid (CI) into 3-phenylpropionate-dihydrodiol (PP-dihydrodiol) and cinnamic acid-dihydrodiol (CI-dihydrodiol), respectively. This Escherichia coli O157:H7 protein is 3-phenylpropionate/cinnamic acid dioxygenase subunit beta.